The sequence spans 281 residues: 2-dehydro-3-deoxyphosphooctonate aldolase 1 (281 aa).

This sequence belongs to the KdsA family.

Its subcellular location is the cytoplasm. The enzyme catalyses D-arabinose 5-phosphate + phosphoenolpyruvate + H2O = 3-deoxy-alpha-D-manno-2-octulosonate-8-phosphate + phosphate. The protein operates within carbohydrate biosynthesis; 3-deoxy-D-manno-octulosonate biosynthesis; 3-deoxy-D-manno-octulosonate from D-ribulose 5-phosphate: step 2/3. It participates in bacterial outer membrane biogenesis; lipopolysaccharide biosynthesis. This Pseudomonas putida (strain ATCC 47054 / DSM 6125 / CFBP 8728 / NCIMB 11950 / KT2440) protein is 2-dehydro-3-deoxyphosphooctonate aldolase 1 (kdsA1).